The sequence spans 82 residues: ATP synthase subunit c, chloroplastic (82 aa).

Position 1 is an N-formylmethionine (methionine 1). 2 helical membrane-spanning segments follow: residues 3 to 23 and 57 to 77; these read PIVAATSVVSAGLAVGLAAIG and FAFMESLTIYGLVVALALLFA.

It belongs to the ATPase C chain family. F-type ATPases have 2 components, F(1) - the catalytic core - and F(0) - the membrane proton channel. F(1) has five subunits: alpha(3), beta(3), gamma(1), delta(1), epsilon(1). F(0) has four main subunits: a(1), b(1), b'(1) and c(10-14). The alpha and beta chains form an alternating ring which encloses part of the gamma chain. F(1) is attached to F(0) by a central stalk formed by the gamma and epsilon chains, while a peripheral stalk is formed by the delta, b and b' chains.

The protein resides in the plastid. Its subcellular location is the chloroplast thylakoid membrane. Its function is as follows. F(1)F(0) ATP synthase produces ATP from ADP in the presence of a proton or sodium gradient. F-type ATPases consist of two structural domains, F(1) containing the extramembraneous catalytic core and F(0) containing the membrane proton channel, linked together by a central stalk and a peripheral stalk. During catalysis, ATP synthesis in the catalytic domain of F(1) is coupled via a rotary mechanism of the central stalk subunits to proton translocation. Functionally, key component of the F(0) channel; it plays a direct role in translocation across the membrane. A homomeric c-ring of between 10-14 subunits forms the central stalk rotor element with the F(1) delta and epsilon subunits. This chain is ATP synthase subunit c, chloroplastic, found in Chlamydomonas reinhardtii (Chlamydomonas smithii).